The following is a 123-amino-acid chain: VQ motif-containing protein 29 (123 aa).

Residues 24-55 form a disordered region; it reads TKNYLTSLHSTRKQPSKPLKRPAISSPLNPMH. The segment covering 33–43 has biased composition (basic residues); that stretch reads STRKQPSKPLK. A VQ motif is present at residues 66 to 75; that stretch reads FKVLVQRLTG. The segment covering 77 to 94 has biased composition (basic and acidic residues); it reads PEHETVQAKPLKTSDDAA. Residues 77–123 are disordered; that stretch reads PEHETVQAKPLKTSDDAAKQSSSSFAFDPSSSWGDFSFQNPANISRW. The span at 97–108 shows a compositional bias: low complexity; sequence SSSSFAFDPSSS. Residues 109–123 show a composition bias toward polar residues; the sequence is WGDFSFQNPANISRW.

It is found in the nucleus. In terms of biological role, may function as negative regulator of flowering transition. This is VQ motif-containing protein 29 from Arabidopsis thaliana (Mouse-ear cress).